The primary structure comprises 141 residues: Hemoglobin subunit alpha-1 (141 aa).

A Globin domain is found at Val1–Arg141. Position 58 (His58) interacts with O2. His87 is a binding site for heme b.

Belongs to the globin family. As to quaternary structure, heterotetramer of two alpha chains and two beta chains. In terms of tissue distribution, red blood cells.

Its function is as follows. Involved in oxygen transport from the lung to the various peripheral tissues. The polypeptide is Hemoglobin subunit alpha-1 (Tadarida brasiliensis (Brazilian free-tailed bat)).